A 503-amino-acid polypeptide reads, in one-letter code: Glycerol kinase (503 aa).

An ADP-binding site is contributed by Thr14. ATP-binding residues include Thr14, Thr15, and Ser16. Thr14 contacts sn-glycerol 3-phosphate. An ADP-binding site is contributed by Arg18. Positions 84, 85, 136, and 246 each coordinate sn-glycerol 3-phosphate. Residues Arg84, Glu85, Tyr136, Asp246, and Gln247 each coordinate glycerol. ADP contacts are provided by Thr268 and Gly311. Positions 268, 311, 315, and 412 each coordinate ATP. ADP is bound by residues Gly412 and Asn416. Residues 468 to 481 (ERTFSPDSDNEKRE) show a composition bias toward basic and acidic residues. The segment at 468–489 (ERTFSPDSDNEKRERRYKGWKK) is disordered.

Belongs to the FGGY kinase family.

It carries out the reaction glycerol + ATP = sn-glycerol 3-phosphate + ADP + H(+). Its pathway is polyol metabolism; glycerol degradation via glycerol kinase pathway; sn-glycerol 3-phosphate from glycerol: step 1/1. With respect to regulation, inhibited by fructose 1,6-bisphosphate (FBP). Its function is as follows. Key enzyme in the regulation of glycerol uptake and metabolism. Catalyzes the phosphorylation of glycerol to yield sn-glycerol 3-phosphate. The chain is Glycerol kinase from Haemophilus influenzae (strain ATCC 51907 / DSM 11121 / KW20 / Rd).